Here is an 842-residue protein sequence, read N- to C-terminus: Glycogen phosphorylase, muscle form (842 aa).

Serine 2 carries the N-acetylserine modification. At serine 15 the chain carries Phosphoserine; by PHK; in form phosphorylase A. 2 residues coordinate AMP: aspartate 43 and tyrosine 76. A phosphotyrosine mark is found at tyrosine 204 and tyrosine 227. 310–319 contributes to the AMP binding site; that stretch reads RRFKSSKFGC. Serine 430 bears the Phosphoserine mark. A Phosphotyrosine modification is found at tyrosine 473. The residue at position 681 (lysine 681) is an N6-(pyridoxal phosphate)lysine. Serine 747 and serine 748 each carry phosphoserine.

This sequence belongs to the glycogen phosphorylase family. As to quaternary structure, homodimer. Homotetramer; to form the enzymatically active phosphorylase A. Pyridoxal 5'-phosphate serves as cofactor. Phosphorylation of Ser-15 converts phosphorylase B (unphosphorylated) to phosphorylase A.

It catalyses the reaction [(1-&gt;4)-alpha-D-glucosyl](n) + phosphate = [(1-&gt;4)-alpha-D-glucosyl](n-1) + alpha-D-glucose 1-phosphate. Allosterically regulated through the non-covalent binding of metabolites, being activated by AMP and inhibited by ATP, ADP, and glucose-6-phosphate. The activity is also controlled by post-translational modifications including phosphorylation. In terms of biological role, allosteric enzyme that catalyzes the rate-limiting step in glycogen catabolism, the phosphorolytic cleavage of glycogen to produce glucose-1-phosphate, and plays a central role in maintaining cellular and organismal glucose homeostasis. This Ovis aries (Sheep) protein is Glycogen phosphorylase, muscle form.